The primary structure comprises 647 residues: Golgi-associated RAB2B interactor protein 3 (647 aa).

Over residues 188 to 202 the composition is skewed to polar residues; it reads IPTADTSTETKSTLV. Disordered regions lie at residues 188–220, 267–296, 361–384, and 465–573; these read IPTA…TSQD, TAGA…GSAR, SKSP…QERS, and RDGS…GFVS. Positions 205-214 are enriched in basic and acidic residues; sequence IHGEGDRDSK. Polar residues predominate over residues 361-378; that stretch reads SKSPGSGQVATGLTGTAS. A Phosphoserine modification is found at S378. A compositionally biased stretch (basic and acidic residues) spans 478–491; it reads TQKEKRERRESDRK. Residues 492 to 501 show a composition bias toward basic residues; the sequence is GSRKSSHHQR. The Bipartite nuclear localization signal signature appears at 494-511; that stretch reads RKSSHHQRTGASRHSSSK. Over residues 528–556 the composition is skewed to basic and acidic residues; sequence KTREDKKEKGRGSLRDQRHSSSYRSESRT. 2 positions are modified to phosphoserine: S634 and S636.

It belongs to the GARIN family. Interacts (via N-terminus) with RAB2B (in GTP-bound form). Interacts with FRG1.

The protein resides in the golgi apparatus. It localises to the nucleus. The protein localises to the cajal body. Its function is as follows. May be involved in RNA biogenesis. In Rattus norvegicus (Rat), this protein is Golgi-associated RAB2B interactor protein 3 (Garin3).